The chain runs to 136 residues: MLSPKRTRFRKQHRGRMKGKSCRGNRICFGRYALQALEPAWITARQIEAGRRAITRYARRGGKIWVRIFPDKPVTLRPTETRMGSGKGSPEYWVSVVKPGRILYEMGGVSETVARAAISIAASKMPIRSQFIRLEI.

The tract at residues 1-20 (MLSPKRTRFRKQHRGRMKGK) is disordered.

It belongs to the universal ribosomal protein uL16 family. Part of the 50S ribosomal subunit.

The protein resides in the plastid. It is found in the chloroplast. This is Large ribosomal subunit protein uL16c from Triticum aestivum (Wheat).